We begin with the raw amino-acid sequence, 87 residues long: Cell division topological specificity factor (87 aa).

This sequence belongs to the MinE family.

In terms of biological role, prevents the cell division inhibition by proteins MinC and MinD at internal division sites while permitting inhibition at polar sites. This ensures cell division at the proper site by restricting the formation of a division septum at the midpoint of the long axis of the cell. This chain is Cell division topological specificity factor, found in Aliivibrio fischeri (strain ATCC 700601 / ES114) (Vibrio fischeri).